We begin with the raw amino-acid sequence, 106 residues long: UPF0145 protein Dhaf_3855 (106 aa).

This sequence belongs to the UPF0145 family.

This chain is UPF0145 protein Dhaf_3855, found in Desulfitobacterium hafniense (strain DSM 10664 / DCB-2).